Consider the following 212-residue polypeptide: Thymidylate kinase (212 aa).

ATP is bound at residue 11 to 18; it reads GPEGAGKT.

The protein belongs to the thymidylate kinase family.

It catalyses the reaction dTMP + ATP = dTDP + ADP. In terms of biological role, phosphorylation of dTMP to form dTDP in both de novo and salvage pathways of dTTP synthesis. This is Thymidylate kinase from Streptococcus pneumoniae serotype 19F (strain G54).